Reading from the N-terminus, the 154-residue chain is Interleukin-2 (154 aa).

The first 20 residues, 1 to 20 (MYRMQLLSCIALSLALVTNS), serve as a signal peptide directing secretion. T23 is a glycosylation site (O-linked (GalNAc...) threonine). C78 and C126 form a disulfide bridge.

It belongs to the IL-2 family.

It is found in the secreted. In terms of biological role, cytokine produced by activated CD4-positive helper T-cells and to a lesser extend activated CD8-positive T-cells and natural killer (NK) cells that plays pivotal roles in the immune response and tolerance. Binds to a receptor complex composed of either the high-affinity trimeric IL-2R (IL2RA/CD25, IL2RB/CD122 and IL2RG/CD132) or the low-affinity dimeric IL-2R (IL2RB and IL2RG). Interaction with the receptor leads to oligomerization and conformation changes in the IL-2R subunits resulting in downstream signaling starting with phosphorylation of JAK1 and JAK3. In turn, JAK1 and JAK3 phosphorylate the receptor to form a docking site leading to the phosphorylation of several substrates including STAT5. This process leads to activation of several pathways including STAT, phosphoinositide-3-kinase/PI3K and mitogen-activated protein kinase/MAPK pathways. Functions as a T-cell growth factor and can increase NK-cell cytolytic activity as well. Promotes strong proliferation of activated B-cells and subsequently immunoglobulin production. Plays a pivotal role in regulating the adaptive immune system by controlling the survival and proliferation of regulatory T-cells, which are required for the maintenance of immune tolerance. Moreover, participates in the differentiation and homeostasis of effector T-cell subsets, including Th1, Th2, Th17 as well as memory CD8-positive T-cells. The protein is Interleukin-2 (IL2) of Macaca mulatta (Rhesus macaque).